We begin with the raw amino-acid sequence, 211 residues long: Protein-L-isoaspartate O-methyltransferase (211 aa).

Residue Ser-62 is part of the active site.

This sequence belongs to the methyltransferase superfamily. L-isoaspartyl/D-aspartyl protein methyltransferase family.

Its subcellular location is the cytoplasm. It catalyses the reaction [protein]-L-isoaspartate + S-adenosyl-L-methionine = [protein]-L-isoaspartate alpha-methyl ester + S-adenosyl-L-homocysteine. In terms of biological role, catalyzes the methyl esterification of L-isoaspartyl residues in peptides and proteins that result from spontaneous decomposition of normal L-aspartyl and L-asparaginyl residues. It plays a role in the repair and/or degradation of damaged proteins. The polypeptide is Protein-L-isoaspartate O-methyltransferase (Shewanella pealeana (strain ATCC 700345 / ANG-SQ1)).